A 122-amino-acid polypeptide reads, in one-letter code: Large ribosomal subunit protein bL20 (122 aa).

This sequence belongs to the bacterial ribosomal protein bL20 family.

Its function is as follows. Binds directly to 23S ribosomal RNA and is necessary for the in vitro assembly process of the 50S ribosomal subunit. It is not involved in the protein synthesizing functions of that subunit. The polypeptide is Large ribosomal subunit protein bL20 (rplT) (Treponema pallidum (strain Nichols)).